The following is a 320-amino-acid chain: Cytochrome f (320 aa).

A signal peptide spans 1–35 (MQTRNTFSWIREEITRSISVSLMIYIITWASISSA). Heme is bound by residues tyrosine 36, cysteine 56, cysteine 59, and histidine 60. Residues 286–306 (VQGLLFFLGSVVLAQIFLVLK) form a helical membrane-spanning segment.

The protein belongs to the cytochrome f family. The 4 large subunits of the cytochrome b6-f complex are cytochrome b6, subunit IV (17 kDa polypeptide, petD), cytochrome f and the Rieske protein, while the 4 small subunits are PetG, PetL, PetM and PetN. The complex functions as a dimer. It depends on heme as a cofactor.

The protein localises to the plastid. Its subcellular location is the chloroplast thylakoid membrane. Functionally, component of the cytochrome b6-f complex, which mediates electron transfer between photosystem II (PSII) and photosystem I (PSI), cyclic electron flow around PSI, and state transitions. The polypeptide is Cytochrome f (Nasturtium officinale (Watercress)).